The sequence spans 66 residues: Sarcoplasmic/endoplasmic reticulum calcium ATPase regulator ARLN (66 aa).

M1 is subject to N-acetylmethionine. Residues 1–38 (MEVDVPGVDGRDGLRERRGLSEGGRQNLDVRPQSGANG) are disordered. The span at 9–20 (DGRDGLRERRGL) shows a compositional bias: basic and acidic residues. A helical transmembrane segment spans residues 45–65 (WLDLWLFIFFDVVVFLFVYFL).

Homooligomer. Can also form heterooligomers with other sarcoplasmic/endoplasmic reticulum calcium ATPase (SERCA) regulators ERLN, PLN, SLN and STRIT1/DWORF. Monomer. Interacts as a monomer with ATP2A2/SERCA2; the interaction results in inhibition of ATP2A2 Ca(2+) affinity.

Its subcellular location is the endoplasmic reticulum membrane. Functionally, inhibits the activity of the calcium ATPases ATP2A2/SERCA2 and ATP2A3/SERCA3 by decreasing their apparent affinity for Ca(2+). In Pongo abelii (Sumatran orangutan), this protein is Sarcoplasmic/endoplasmic reticulum calcium ATPase regulator ARLN (ARLN).